The chain runs to 122 residues: Small ribosomal subunit protein uS13 (122 aa).

The interval 99–122 (RGQRTHTNARTRKGPAKAIAGKKK) is disordered.

It belongs to the universal ribosomal protein uS13 family. In terms of assembly, part of the 30S ribosomal subunit. Forms a loose heterodimer with protein S19. Forms two bridges to the 50S subunit in the 70S ribosome.

Its function is as follows. Located at the top of the head of the 30S subunit, it contacts several helices of the 16S rRNA. In the 70S ribosome it contacts the 23S rRNA (bridge B1a) and protein L5 of the 50S subunit (bridge B1b), connecting the 2 subunits; these bridges are implicated in subunit movement. Contacts the tRNAs in the A and P-sites. This Rhizobium etli (strain ATCC 51251 / DSM 11541 / JCM 21823 / NBRC 15573 / CFN 42) protein is Small ribosomal subunit protein uS13.